The following is a 628-amino-acid chain: Vacuolar-sorting receptor 3 (628 aa).

The N-terminal stretch at 1–24 (MKQLLCYLPWLLLLTLLVSPLNDA) is a signal peptide. Over 25 to 569 (RFVVEKNSLS…SKTGAQVRSA (545 aa)) the chain is Lumenal. Positions 56–168 (QYGGSMAGTV…GFGEKLKKAI (113 aa)) constitute a PA domain. Residues Asn148, Asn294, and Asn434 are each glycosylated (N-linked (GlcNAc...) asparagine). EGF-like domains follow at residues 416-466 (ESNE…SHCE) and 469-516 (GPGR…KKCE). Disulfide bonds link Cys420–Cys438, Cys427–Cys447, Cys449–Cys465, Cys473–Cys493, Cys480–Cys501, Cys503–Cys515, and Cys545–Cys558. The 43-residue stretch at 517-559 (DINECKEKKACQCPECSCKNTWGSYECSCSGDLLYIRDHDTCI) folds into the EGF-like 3; calcium-binding domain. Residues 570-590 (WAAVWLIMLSLGLAAAGAYLV) form a helical membrane-spanning segment. The Cytoplasmic segment spans residues 591-628 (YKYRLRQYMDSEIRAIMAQYMPLDSQPEIPNHVNDERA). Residues 610 to 613 (YMPL) carry the Tyrosine-based internalization motif motif.

This sequence belongs to the VSR (BP-80) family. As to expression, expressed in seeds, seedlings, roots, leaves, flowers and siliques.

It is found in the membrane. The protein localises to the golgi apparatus membrane. The protein resides in the cytoplasmic vesicle. Its subcellular location is the clathrin-coated vesicle membrane. It localises to the prevacuolar compartment membrane. Vacuolar-sorting receptor (VSR) involved in clathrin-coated vesicles sorting from Golgi apparatus to vacuoles. This is Vacuolar-sorting receptor 3 (VSR3) from Arabidopsis thaliana (Mouse-ear cress).